Consider the following 662-residue polypeptide: Serine/threonine-protein kinase PTK1/STK1 (662 aa).

Residues 35-119 (GNKLKKKASL…SSTSRNLSNS (85 aa)) are disordered. Positions 50-60 (STSTNDSESSS) are enriched in low complexity. Polar residues-rich tracts occupy residues 61–91 (PKLPNSLKTSRRANSFAHTTNSKRSLSSAST) and 98–119 (GSSTSISRGNRHSSTSRNLSNS). The Protein kinase domain occupies 196–503 (DDENKTIGWG…IDDLFEDPWF (308 aa)). Residues 202–210 (IGWGGSCEV) and K226 each bind ATP. The active-site Proton acceptor is the D329. Positions 605–631 (TLTLSEEPPATPAPSAPSAPSARVRGH) are disordered.

Belongs to the protein kinase superfamily. Ser/Thr protein kinase family.

It catalyses the reaction L-seryl-[protein] + ATP = O-phospho-L-seryl-[protein] + ADP + H(+). The enzyme catalyses L-threonyl-[protein] + ATP = O-phospho-L-threonyl-[protein] + ADP + H(+). Its function is as follows. Essential determinant for low-affinity spermidine transport. This Saccharomyces cerevisiae (strain ATCC 204508 / S288c) (Baker's yeast) protein is Serine/threonine-protein kinase PTK1/STK1 (PTK1).